Here is a 467-residue protein sequence, read N- to C-terminus: Sialic acid-binding Ig-like lectin 12 (467 aa).

An N-terminal signal peptide occupies residues 1–18; it reads MLLLLLLLLLWGIKGVEG. Over 19-353 the chain is Extracellular; the sequence is QNPQEVFTLN…ATLSEMMMGT (335 aa). In terms of domain architecture, Ig-like V-type spans 21 to 141; that stretch reads PQEVFTLNVE…TKYNYMWDKM (121 aa). 3 disulfides stabilise this stretch: Cys-40–Cys-176, Cys-45–Cys-108, and Cys-170–Cys-219. The N-linked (GlcNAc...) asparagine glycan is linked to Asn-46. Arg-126 contacts N-acetylneuraminate. 2 consecutive Ig-like C2-type domains span residues 152-239 and 242-339; these read PQIL…LNVS and PKNL…LSLS. N-linked (GlcNAc...) asparagine glycans are attached at residues Asn-167, Asn-197, Asn-216, Asn-227, Asn-237, Asn-244, Asn-262, Asn-287, and Asn-294. Residues Cys-278 and Cys-323 are joined by a disulfide bond. The helical transmembrane segment at 354-374 threads the bilayer; it reads FVGSGVTALLFLSVCILLLAV. Residues 375–467 are Cytoplasmic-facing; the sequence is RSYRRKPARP…IKFPQRTAWP (93 aa). The ITIM motif motif lies at 430-435; sequence IHYATL. Phosphotyrosine is present on residues Tyr-432 and Tyr-455. Positions 453 to 458 match the SLAM-like motif motif; that stretch reads TEYSEI.

This sequence belongs to the immunoglobulin superfamily. SIGLEC (sialic acid binding Ig-like lectin) family. Homodimer; disulfide-linked. Interacts with PTPN6/SHP-1 and PTPN11/SHP-2 upon phosphorylation. Post-translationally, phosphorylation of Tyr-432 is required for binding to PTPN6 and PTPN11. Phosphorylation of Tyr-455 is involved in binding to PTPN6. Tyr-432 needs to be phosphorylated prior to Tyr-455. In terms of tissue distribution, expressed by monocytic/myeloid lineage cells. Found at higher levels in spleen, liver and heart. Found at lower levels in kidney and lung.

The protein localises to the membrane. Functionally, putative adhesion molecule that mediates sialic-acid dependent binding to cells. The sialic acid recognition site may be masked by cis interactions with sialic acids on the same cell surface. In the immune response, may act as an inhibitory receptor upon ligand induced tyrosine phosphorylation by recruiting cytoplasmic phosphatase(s) via their SH2 domain(s) that block signal transduction through dephosphorylation of signaling molecules. The sequence is that of Sialic acid-binding Ig-like lectin 12 (Siglec12) from Mus musculus (Mouse).